A 306-amino-acid chain; its full sequence is tRNA N6-adenosine threonylcarbamoyltransferase (306 aa).

Fe cation contacts are provided by His-110 and His-114. Residues 132-136 (IASGK), Asp-165, Gly-178, Asp-182, and Asn-268 contribute to the substrate site. Fe cation is bound at residue Asp-292.

Belongs to the KAE1 / TsaD family. Fe(2+) is required as a cofactor.

Its subcellular location is the cytoplasm. The enzyme catalyses L-threonylcarbamoyladenylate + adenosine(37) in tRNA = N(6)-L-threonylcarbamoyladenosine(37) in tRNA + AMP + H(+). Its function is as follows. Required for the formation of a threonylcarbamoyl group on adenosine at position 37 (t(6)A37) in tRNAs that read codons beginning with adenine. Is involved in the transfer of the threonylcarbamoyl moiety of threonylcarbamoyl-AMP (TC-AMP) to the N6 group of A37, together with TsaE and TsaB. TsaD likely plays a direct catalytic role in this reaction. The chain is tRNA N6-adenosine threonylcarbamoyltransferase from Malacoplasma penetrans (strain HF-2) (Mycoplasma penetrans).